Here is a 461-residue protein sequence, read N- to C-terminus: Polycomb group protein FIE1 (461 aa).

Positions 1 to 11 (MPPSKARRKRS) are enriched in basic residues. The interval 1–56 (MPPSKARRKRSLRDITATVATGTVANSKPGSSSTNEGKQQDKKKEGPQEPDIPPLP) is disordered. A compositionally biased stretch (polar residues) spans 18–37 (TVATGTVANSKPGSSSTNEG). The span at 38 to 47 (KQQDKKKEGP) shows a compositional bias: basic and acidic residues. 6 WD repeats span residues 143–186 (DKDE…LDKS), 189–229 (GHGG…CILV), 235–275 (GHRH…IYVE), 301–338 (VHSD…RRPG), 351–391 (PKCS…PVLI), and 398–437 (ECKS…ASSS). The interval 429–461 (EVDPAASSSKPDQAAAPAAGVGAGAGADADADA) is disordered. Over residues 432-448 (PAASSSKPDQAAAPAAG) the composition is skewed to low complexity.

Belongs to the WD repeat ESC family. Specifically expressed in kernel starting from 6 days after pollination.

The protein resides in the nucleus. Functionally, polycomb group (PcG) protein. PcG proteins act by forming multiprotein complexes, which are required to maintain the transcriptionally repressive state of homeotic genes throughout development. PcG proteins are not required to initiate repression, but to maintain it during later stages of development. They probably act via the methylation of histones, rendering chromatin heritably changed in its expressibility. In Zea mays (Maize), this protein is Polycomb group protein FIE1 (FIE1).